A 208-amino-acid chain; its full sequence is Holliday junction branch migration complex subunit RuvA (208 aa).

Residues 1 to 64 are domain I; sequence MIGKLKGIVD…EDMIRLYGFR (64 aa). A domain II region spans residues 65-143; the sequence is SDAEREWFRL…AFAPVDPALV (79 aa). The interval 144–152 is flexible linker; sequence ALTGAVEDR. The segment at 153 to 208 is domain III; the sequence is TAPQPVADAISALVNLGYPQVQASAAIAAALKGLGDGAETVEAKTLIRLGLRELAR.

It belongs to the RuvA family. As to quaternary structure, homotetramer. Forms an RuvA(8)-RuvB(12)-Holliday junction (HJ) complex. HJ DNA is sandwiched between 2 RuvA tetramers; dsDNA enters through RuvA and exits via RuvB. An RuvB hexamer assembles on each DNA strand where it exits the tetramer. Each RuvB hexamer is contacted by two RuvA subunits (via domain III) on 2 adjacent RuvB subunits; this complex drives branch migration. In the full resolvosome a probable DNA-RuvA(4)-RuvB(12)-RuvC(2) complex forms which resolves the HJ.

Its subcellular location is the cytoplasm. Functionally, the RuvA-RuvB-RuvC complex processes Holliday junction (HJ) DNA during genetic recombination and DNA repair, while the RuvA-RuvB complex plays an important role in the rescue of blocked DNA replication forks via replication fork reversal (RFR). RuvA specifically binds to HJ cruciform DNA, conferring on it an open structure. The RuvB hexamer acts as an ATP-dependent pump, pulling dsDNA into and through the RuvAB complex. HJ branch migration allows RuvC to scan DNA until it finds its consensus sequence, where it cleaves and resolves the cruciform DNA. The chain is Holliday junction branch migration complex subunit RuvA from Methylorubrum populi (strain ATCC BAA-705 / NCIMB 13946 / BJ001) (Methylobacterium populi).